The chain runs to 454 residues: L-serine dehydratase 1 (454 aa).

The protein belongs to the iron-sulfur dependent L-serine dehydratase family. [4Fe-4S] cluster is required as a cofactor. Post-translationally, activated by post-translational modification by a system involving at least three gene products. Activation is mimicked in vitro by iron and dithiothreitol. There is considerable evidence for a free-radical activation mechanism.

It catalyses the reaction L-serine = pyruvate + NH4(+). The protein operates within carbohydrate biosynthesis; gluconeogenesis. In terms of biological role, also deaminates threonine, particularly when it is present in high concentration. This Escherichia coli (strain K12) protein is L-serine dehydratase 1 (sdaA).